Consider the following 133-residue polypeptide: Large ribosomal subunit protein eL14 (133 aa).

The protein belongs to the eukaryotic ribosomal protein eL14 family.

The polypeptide is Large ribosomal subunit protein eL14 (RPL14) (Griffithsia japonica (Red alga)).